A 307-amino-acid chain; its full sequence is Porphobilinogen deaminase (307 aa).

An S-(dipyrrolylmethanemethyl)cysteine modification is found at Cys239.

This sequence belongs to the HMBS family. In terms of assembly, monomer. Requires dipyrromethane as cofactor.

It catalyses the reaction 4 porphobilinogen + H2O = hydroxymethylbilane + 4 NH4(+). It participates in porphyrin-containing compound metabolism; protoporphyrin-IX biosynthesis; coproporphyrinogen-III from 5-aminolevulinate: step 2/4. Functionally, tetrapolymerization of the monopyrrole PBG into the hydroxymethylbilane pre-uroporphyrinogen in several discrete steps. This chain is Porphobilinogen deaminase, found in Campylobacter jejuni subsp. jejuni serotype O:23/36 (strain 81-176).